A 338-amino-acid chain; its full sequence is Glyceraldehyde-3-phosphate dehydrogenase (338 aa).

NAD(+) is bound by residues threonine 11–isoleucine 12 and glycine 111. Serine 140–asparagine 142 is a binding site for D-glyceraldehyde 3-phosphate. Catalysis depends on cysteine 141, which acts as the Nucleophile. An NAD(+)-binding site is contributed by arginine 169. Positions glycine 170 to histidine 195 are disordered. A D-glyceraldehyde 3-phosphate-binding site is contributed by histidine 195–glycine 196. Residue glutamine 302 coordinates NAD(+).

The protein belongs to the glyceraldehyde-3-phosphate dehydrogenase family. As to quaternary structure, homotetramer.

It is found in the cytoplasm. The catalysed reaction is D-glyceraldehyde 3-phosphate + phosphate + NADP(+) = (2R)-3-phospho-glyceroyl phosphate + NADPH + H(+). The enzyme catalyses D-glyceraldehyde 3-phosphate + phosphate + NAD(+) = (2R)-3-phospho-glyceroyl phosphate + NADH + H(+). Its pathway is carbohydrate degradation; glycolysis; pyruvate from D-glyceraldehyde 3-phosphate: step 1/5. The chain is Glyceraldehyde-3-phosphate dehydrogenase from Methanobrevibacter smithii (strain ATCC 35061 / DSM 861 / OCM 144 / PS).